The following is a 487-amino-acid chain: Probable cytochrome P450 313a5 (487 aa).

A Phosphotyrosine modification is found at Y223. C433 provides a ligand contact to heme.

Belongs to the cytochrome P450 family. Requires heme as cofactor.

Its subcellular location is the endoplasmic reticulum membrane. It localises to the microsome membrane. May be involved in the metabolism of insect hormones and in the breakdown of synthetic insecticides. This is Probable cytochrome P450 313a5 (Cyp313a5) from Drosophila melanogaster (Fruit fly).